A 102-amino-acid polypeptide reads, in one-letter code: NADH-quinone oxidoreductase subunit K (102 aa).

The next 3 helical transmembrane spans lie at 5–25, 31–51, and 62–82; these read LAHY…GIFL, IILL…FVAF, and VFVF…LAIL.

It belongs to the complex I subunit 4L family. As to quaternary structure, NDH-1 is composed of 14 different subunits. Subunits NuoA, H, J, K, L, M, N constitute the membrane sector of the complex.

It localises to the cell inner membrane. The enzyme catalyses a quinone + NADH + 5 H(+)(in) = a quinol + NAD(+) + 4 H(+)(out). In terms of biological role, NDH-1 shuttles electrons from NADH, via FMN and iron-sulfur (Fe-S) centers, to quinones in the respiratory chain. The immediate electron acceptor for the enzyme in this species is believed to be ubiquinone. Couples the redox reaction to proton translocation (for every two electrons transferred, four hydrogen ions are translocated across the cytoplasmic membrane), and thus conserves the redox energy in a proton gradient. The protein is NADH-quinone oxidoreductase subunit K of Bordetella avium (strain 197N).